A 401-amino-acid chain; its full sequence is MQVSFACTEQTLRSRTSEDRLCPSRPSGGQNGVSMAQTKQRTPPMGAKNHNQVLPLLSHILRESTVKSTGMKYRNLGKSGLRVSCLGLGTWVTFGSQISDEVAENLMTVAYEHGVNLFDTAEVYAAGRAERTLGKILKKKEWRRSSYVVTTKIYWGGQAETERGLSRKHIIEGLRGSLERLQLDYVDIVFANRMDPNSPMEEIVRAMTFVINQGMAMYWGTSRWSAMEIMEAYSVARQFNLIPPVCEQAEYHLFQREKVETQLPELYHKIGVGSMTWSPLACGLITGKYTDTVPEKSRASFKGYHWLKEKAISQEGKKQHSKVKELHPIADRLNCTVTQLAIAWCLRSEGVSSVLLGVSNIEQLLENLGAIQVLPHLTPQLVTEIDQILGNKPNLKKDSRA.

Composition is skewed to polar residues over residues 1–14 (MQVS…TLRS) and 32–41 (GVSMAQTKQR). The disordered stretch occupies residues 1-49 (MQVSFACTEQTLRSRTSEDRLCPSRPSGGQNGVSMAQTKQRTPPMGAKN). NADP(+) contacts are provided by Thr-90, Trp-91, Gln-97, and Asp-119. The active-site Proton donor/acceptor is the Tyr-124. NADP(+)-binding residues include Asn-192, Ser-222, Arg-223, Gln-248, Trp-277, Ser-278, Pro-279, Leu-280, Ala-281, Cys-282, Lys-288, Arg-298, Gly-357, Ser-359, Gln-363, Glu-366, and Asn-367.

Belongs to the shaker potassium channel beta subunit family. Forms heteromultimeric complex with alpha subunits. Identified in potassium channel complexes containing KCNA1 and KCNA2.

The protein resides in the cytoplasm. In terms of biological role, regulatory subunit of the voltage-gated potassium (Kv) channels composed of pore-forming and potassium-conducting alpha subunits and of regulatory beta subunit. The beta-3/KCNAB3 subunit may mediate closure of potassium channels. Increases and accelerates inactivation of Kv1.1/KCNA1 and Kv2.2/KCNA2 subunit-containing channels. May display nicotinamide adenine dinucleotide phosphate (NADPH)-dependent aldoketoreductase activity. The binding of oxidized and reduced NADP(H) cofactors may be required for the regulation of potassium channel activity. In Xenopus laevis (African clawed frog), this protein is Voltage-gated potassium channel subunit beta-3 (kcnab3).